A 333-amino-acid polypeptide reads, in one-letter code: MRVLASAPAKIILFGEHSVVYGKPAIAAAIDLRTYVKAEFNENGRIRIEAKDIRTPGLTVSFSEDQIYFETDYGKAAEVLSYVREAINLVMEEAEKQKGVTVSITSQIPVGAGLGSSAAVAVATIGAVSRLFGLELTPEEVAKLGHKVELLVQGASSGIDPTVSAIGGFLYYQKGSFESLPVVELPIVVGYTGSSGSTKELVAKVRKNYEEMPEIIDPILNSMGRLVEKAREVILAEYDKEIKFKRLGTLMNINHGLLDALGVSTKSLSDLVYASREAGALGAKITGAGGGGCMYALAPEKQSEVATAIKIAGGMPIVTKISREGLRIEDIVQ.

Residue 109–119 (PVGAGLGSSAA) participates in ATP binding. The Proton acceptor role is filled by Asp-160.

It belongs to the GHMP kinase family. Mevalonate kinase subfamily. Homodimer. It depends on Mg(2+) as a cofactor.

The protein resides in the cytoplasm. It carries out the reaction (R)-mevalonate + ATP = (R)-5-phosphomevalonate + ADP + H(+). It functions in the pathway isoprenoid biosynthesis; isopentenyl diphosphate biosynthesis via mevalonate pathway; isopentenyl diphosphate from (R)-mevalonate: step 1/3. Its function is as follows. Catalyzes the phosphorylation of (R)-mevalonate (MVA) to (R)-mevalonate 5-phosphate (MVAP). Functions in the mevalonate (MVA) pathway leading to isopentenyl diphosphate (IPP), a key precursor for the biosynthesis of isoprenoid compounds such as archaeal membrane lipids. The sequence is that of Mevalonate kinase from Thermococcus sibiricus (strain DSM 12597 / MM 739).